A 182-amino-acid polypeptide reads, in one-letter code: Translation initiation factor IF-3 (182 aa).

Belongs to the IF-3 family. In terms of assembly, monomer.

It localises to the cytoplasm. Its function is as follows. IF-3 binds to the 30S ribosomal subunit and shifts the equilibrium between 70S ribosomes and their 50S and 30S subunits in favor of the free subunits, thus enhancing the availability of 30S subunits on which protein synthesis initiation begins. This Endomicrobium trichonymphae protein is Translation initiation factor IF-3.